Reading from the N-terminus, the 342-residue chain is Phospho-N-acetylmuramoyl-pentapeptide-transferase (342 aa).

A run of 10 helical transmembrane segments spans residues Val8 to Pro28, Gly58 to Phe78, Ile86 to Leu106, Ile116 to Leu136, Gly152 to Ser172, Leu184 to Leu204, Val213 to Leu233, Val242 to Met262, Phe267 to Val287, and Ile318 to Ile338.

The protein belongs to the glycosyltransferase 4 family. MraY subfamily. Mg(2+) serves as cofactor.

The protein resides in the cell inner membrane. The enzyme catalyses UDP-N-acetyl-alpha-D-muramoyl-L-alanyl-gamma-D-glutamyl-meso-2,6-diaminopimeloyl-D-alanyl-D-alanine + di-trans,octa-cis-undecaprenyl phosphate = di-trans,octa-cis-undecaprenyl diphospho-N-acetyl-alpha-D-muramoyl-L-alanyl-D-glutamyl-meso-2,6-diaminopimeloyl-D-alanyl-D-alanine + UMP. The protein operates within cell wall biogenesis; peptidoglycan biosynthesis. In terms of biological role, catalyzes the initial step of the lipid cycle reactions in the biosynthesis of the cell wall peptidoglycan: transfers peptidoglycan precursor phospho-MurNAc-pentapeptide from UDP-MurNAc-pentapeptide onto the lipid carrier undecaprenyl phosphate, yielding undecaprenyl-pyrophosphoryl-MurNAc-pentapeptide, known as lipid I. The protein is Phospho-N-acetylmuramoyl-pentapeptide-transferase of Anaplasma marginale (strain Florida).